The primary structure comprises 62 residues: GTNAAMRKAFNYQDTAKNGKKCSGCAQFVPGASPTAAGGCKVIPGDNQIAPGGYCDAFIVKK.

4 residues coordinate [4Fe-4S] cluster: Cys22, Cys25, Cys40, and Cys55.

Belongs to the high-potential iron-sulfur protein (HiPIP) family. As to quaternary structure, homodimer.

In terms of biological role, specific class of high-redox-potential 4Fe-4S ferredoxins. Functions in anaerobic electron transport in most purple and in some other photosynthetic bacteria and in at least one genus (Paracoccus) of halophilic, denitrifying bacteria. The sequence is that of High-potential iron-sulfur protein (hip) from Rhodocyclus tenuis (Rhodospirillum tenue).